Here is a 496-residue protein sequence, read N- to C-terminus: Probable cytosol aminopeptidase (496 aa).

The Mn(2+) site is built by lysine 267 and aspartate 272. The active site involves lysine 279. 3 residues coordinate Mn(2+): aspartate 290, aspartate 349, and glutamate 351. Arginine 353 is an active-site residue.

This sequence belongs to the peptidase M17 family. Requires Mn(2+) as cofactor.

The protein localises to the cytoplasm. It carries out the reaction Release of an N-terminal amino acid, Xaa-|-Yaa-, in which Xaa is preferably Leu, but may be other amino acids including Pro although not Arg or Lys, and Yaa may be Pro. Amino acid amides and methyl esters are also readily hydrolyzed, but rates on arylamides are exceedingly low.. The catalysed reaction is Release of an N-terminal amino acid, preferentially leucine, but not glutamic or aspartic acids.. In terms of biological role, presumably involved in the processing and regular turnover of intracellular proteins. Catalyzes the removal of unsubstituted N-terminal amino acids from various peptides. In Methylobacillus flagellatus (strain ATCC 51484 / DSM 6875 / VKM B-1610 / KT), this protein is Probable cytosol aminopeptidase.